Here is a 136-residue protein sequence, read N- to C-terminus: Large ribosomal subunit protein uL16 (136 aa).

Belongs to the universal ribosomal protein uL16 family. As to quaternary structure, part of the 50S ribosomal subunit.

Its function is as follows. Binds 23S rRNA and is also seen to make contacts with the A and possibly P site tRNAs. The protein is Large ribosomal subunit protein uL16 of Citrobacter koseri (strain ATCC BAA-895 / CDC 4225-83 / SGSC4696).